The primary structure comprises 1295 residues: Serine protease sat autotransporter (1295 aa).

The signal sequence occupies residues 1–49 (MNKIYSLKYSAATGGLIAVSELAKRVSGKTNRKLVATMLSLAVAGTVNA). One can recognise a Peptidase S6 domain in the interval 51 to 300 (NIDISNVWAR…TKYNDKLVSE (250 aa)). Residues histidine 121, aspartate 149, and serine 256 each act as charge relay system in the active site. The Autotransporter domain maps to 1029-1295 (DINGESGAWA…AINANFRYSF (267 aa)).

Cleaved to release the mature protein from the outer membrane.

The protein localises to the periplasm. It is found in the secreted. Its subcellular location is the cell surface. It localises to the cell outer membrane. Its activity is regulated as follows. Inhibited by phenylmethylsulfonyl fluoride and Pefabloc. Shows serine protease activity and displays cytophatic activity, including elongation, rounding, and detachment of a proportion of the cells from monolayer in culture. Triggers vacuolation within the cytoplasm of the human bladder and kidney cells. This Escherichia coli O6:H1 (strain CFT073 / ATCC 700928 / UPEC) protein is Serine protease sat autotransporter (sat).